Consider the following 244-residue polypeptide: Putative nucleosome assembly protein C36B7.08c (244 aa).

The segment at 199-244 is disordered; it reads EAMTEEASDEDESVDLEEDEEEEDEEDEEGDEEKQEPPSKKSKKSN. The segment covering 201–232 has biased composition (acidic residues); the sequence is MTEEASDEDESVDLEEDEEEEDEEDEEGDEEK. A Phosphoserine modification is found at S211.

Belongs to the nucleosome assembly protein (NAP) family.

It is found in the nucleus. In Schizosaccharomyces pombe (strain 972 / ATCC 24843) (Fission yeast), this protein is Putative nucleosome assembly protein C36B7.08c.